The sequence spans 137 residues: Protein FrxA (137 aa).

This is Protein FrxA (frxA) from Pyrococcus furiosus (strain ATCC 43587 / DSM 3638 / JCM 8422 / Vc1).